A 72-amino-acid polypeptide reads, in one-letter code: U10-myrmicitoxin-Tb1a (72 aa).

The signal sequence occupies residues 1 to 26 (MRVSYLSLTLTIVVVIAIIYAPETEA). A propeptide spanning residues 27–36 (KAWADADAEA) is cleaved from the precursor.

It belongs to the formicidae venom precursor-01 superfamily. In terms of tissue distribution, expressed by the venom gland.

The protein resides in the secreted. In terms of biological role, in vivo, this neurotoxin paralyzes about 40% of blowflies (L.caesar) one hour after intrathoracic injection, when tested at high doses (28 nmol/g). In Tetramorium bicarinatum (Tramp ant), this protein is U10-myrmicitoxin-Tb1a.